A 98-amino-acid polypeptide reads, in one-letter code: Protein translation factor SUI1 homolog (98 aa).

The protein belongs to the SUI1 family.

The polypeptide is Protein translation factor SUI1 homolog (Thermococcus gammatolerans (strain DSM 15229 / JCM 11827 / EJ3)).